The following is a 172-amino-acid chain: Large ribosomal subunit protein uL10 (172 aa).

The protein belongs to the universal ribosomal protein uL10 family. In terms of assembly, part of the ribosomal stalk of the 50S ribosomal subunit. The N-terminus interacts with L11 and the large rRNA to form the base of the stalk. The C-terminus forms an elongated spine to which L12 dimers bind in a sequential fashion forming a multimeric L10(L12)X complex.

Its function is as follows. Forms part of the ribosomal stalk, playing a central role in the interaction of the ribosome with GTP-bound translation factors. The sequence is that of Large ribosomal subunit protein uL10 from Rhodopseudomonas palustris (strain HaA2).